We begin with the raw amino-acid sequence, 114 residues long: UPF0102 protein HPG27_782 (114 aa).

The protein belongs to the UPF0102 family.

The sequence is that of UPF0102 protein HPG27_782 from Helicobacter pylori (strain G27).